The primary structure comprises 196 residues: NADH-quinone oxidoreductase subunit B (196 aa).

Cysteine 63, cysteine 64, cysteine 129, and cysteine 159 together coordinate [4Fe-4S] cluster.

The protein belongs to the complex I 20 kDa subunit family. As to quaternary structure, NDH-1 is composed of 14 different subunits. Subunits NuoB, C, D, E, F, and G constitute the peripheral sector of the complex. Requires [4Fe-4S] cluster as cofactor.

The protein localises to the cell inner membrane. The enzyme catalyses a quinone + NADH + 5 H(+)(in) = a quinol + NAD(+) + 4 H(+)(out). Functionally, NDH-1 shuttles electrons from NADH, via FMN and iron-sulfur (Fe-S) centers, to quinones in the respiratory chain. The immediate electron acceptor for the enzyme in this species is believed to be a menaquinone. Couples the redox reaction to proton translocation (for every two electrons transferred, four hydrogen ions are translocated across the cytoplasmic membrane), and thus conserves the redox energy in a proton gradient. The chain is NADH-quinone oxidoreductase subunit B from Bacteroides fragilis (strain ATCC 25285 / DSM 2151 / CCUG 4856 / JCM 11019 / LMG 10263 / NCTC 9343 / Onslow / VPI 2553 / EN-2).